We begin with the raw amino-acid sequence, 541 residues long: MSNTVVTGEVLDKSIREVVRILEDAVGCTAGPKGLTVAISKPYGSPEITKDGYKVMKSIKPEEPLAAAIASIITQSASQCNDKVGDGTTTCSILTAKVIEEVSKAKAAGSDIVSIKNGILKAKEAVLTALMSMRREVEEDEIAQVATLSANGDKNIGSKIAQCVKEVGKDGVITVEESKGFKDLEVEKTDGMQFDRGYLSPYFVTNAEKMLVEFENPYIFLTEKKINLVQSILPILENVARSGRPLLIIAEDVEGEALSTLVLNKLRGGLQVAAVKAPGFGDRRKDMLGDIAVIVGAKYVVNDELAVKMEDIALSDLGTAKSVRITKDATTIIGSVDSSSESIASRTNQIKAQIENSSSDYDKEKLRERLAKLSGGVAVLKVGGSSEVEVKERKDRVEDALHATRAAVEEGVVPGGGAALLYALSSLDGLKGKNDDEQWGIDIIRRAACAPIKRIIKNSGSEEAPCVIQHLLKQNDKELIYNVDTMNYANAFTSGVMDPLKVVRIAFDLAVSLAAVFMTLNAVVVDVPSKNDAAGAGAGGM.

ATP contacts are provided by residues 29–32, lysine 50, 86–90, glycine 416, and aspartate 498; these read TAGP and DGTTT.

It belongs to the chaperonin (HSP60) family. Forms a cylinder of 14 subunits composed of two heptameric rings stacked back-to-back. Interacts with the co-chaperonin GroES.

The protein resides in the cytoplasm. It catalyses the reaction ATP + H2O + a folded polypeptide = ADP + phosphate + an unfolded polypeptide.. Functionally, together with its co-chaperonin GroES, plays an essential role in assisting protein folding. The GroEL-GroES system forms a nano-cage that allows encapsulation of the non-native substrate proteins and provides a physical environment optimized to promote and accelerate protein folding. This is Chaperonin GroEL from Anaplasma phagocytophilum (Ehrlichia phagocytophila).